A 498-amino-acid polypeptide reads, in one-letter code: Minor fimbrium subunit Mfa1 (498 aa).

The signal sequence occupies residues 1–19; that stretch reads MKLNKMFLVGALLSLGFAS. C20 carries N-palmitoyl cysteine lipidation. C20 is lipidated: S-diacylglycerol cysteine. Positions 20–50 are excised as a propeptide; it reads CSKEGNGPAPDSSSTADTHMSVSMSLPQHNR. Residues 436–476 form a disordered region; sequence SGNPFVPTDPDPNNPDTPDNPDTPDPEDPDTPNPEEPLPVQ.

Belongs to the bacteroidetes fimbrillin superfamily. FimA/Mfa1 family. In terms of assembly, structural component of the fimbrial stalk. Minor fimbriae are composed of a structural subunit, such as the 53 kDa fimbrillin, and the accessory subunits Mfa3, Mfa4 and Mfa5. Fimbrium assembly occurs by linear, head-to-tail oligomerization of fimbrial subunits. This is mediated via insertion of a C-terminal beta-strand from one subunit into a groove in the N-terminal domain of the following subunit.

Its subcellular location is the fimbrium. The protein resides in the cell outer membrane. Functionally, structural subunit of the minor fimbriae. These filamentous pili are attached to the cell surface; they mediate biofilm formation, adhesion onto host cells and onto other bacteria that are part of the oral microbiome. They play an important role in invasion of periodontal tissues and are recognized as major virulence factors. Mfa1 orthologs from different strains have highly divergent sequences, and this correlates with pathogenicity. In Porphyromonas gingivalis (Bacteroides gingivalis), this protein is Minor fimbrium subunit Mfa1.